Reading from the N-terminus, the 29-residue chain is Varv peptide D (29 aa).

The cyclopeptide (Gly-Asn) cross-link spans 1-29 (GLPICGETCVGGSCNTPGCSCSWPVCTRN). 3 disulfides stabilise this stretch: Cys-5–Cys-19, Cys-9–Cys-21, and Cys-14–Cys-26.

In terms of processing, this is a cyclic peptide.

Probably participates in a plant defense mechanism. The polypeptide is Varv peptide D (Viola arvensis (European field pansy)).